The following is a 239-amino-acid chain: Probable transcriptional regulatory protein BC_0539 (239 aa).

This sequence belongs to the TACO1 family. YeeN subfamily.

The protein resides in the cytoplasm. This Bacillus cereus (strain ATCC 14579 / DSM 31 / CCUG 7414 / JCM 2152 / NBRC 15305 / NCIMB 9373 / NCTC 2599 / NRRL B-3711) protein is Probable transcriptional regulatory protein BC_0539.